The primary structure comprises 274 residues: Formamidopyrimidine-DNA glycosylase (274 aa).

P2 functions as the Schiff-base intermediate with DNA in the catalytic mechanism. E3 (proton donor) is an active-site residue. The active-site Proton donor; for beta-elimination activity is the K60. DNA-binding residues include H93 and R112. The segment at 240 to 274 adopts an FPG-type zinc-finger fold; sequence FVYGRKGEPCKRCGTPIEKTVVAGRGTHYCPRCQR. R264 functions as the Proton donor; for delta-elimination activity in the catalytic mechanism.

This sequence belongs to the FPG family. In terms of assembly, monomer. The cofactor is Zn(2+).

The enzyme catalyses Hydrolysis of DNA containing ring-opened 7-methylguanine residues, releasing 2,6-diamino-4-hydroxy-5-(N-methyl)formamidopyrimidine.. It catalyses the reaction 2'-deoxyribonucleotide-(2'-deoxyribose 5'-phosphate)-2'-deoxyribonucleotide-DNA = a 3'-end 2'-deoxyribonucleotide-(2,3-dehydro-2,3-deoxyribose 5'-phosphate)-DNA + a 5'-end 5'-phospho-2'-deoxyribonucleoside-DNA + H(+). Its function is as follows. Involved in base excision repair of DNA damaged by oxidation or by mutagenic agents. Acts as a DNA glycosylase that recognizes and removes damaged bases. Has a preference for oxidized purines, such as 7,8-dihydro-8-oxoguanine (8-oxoG). Has AP (apurinic/apyrimidinic) lyase activity and introduces nicks in the DNA strand. Cleaves the DNA backbone by beta-delta elimination to generate a single-strand break at the site of the removed base with both 3'- and 5'-phosphates. This chain is Formamidopyrimidine-DNA glycosylase, found in Geobacillus kaustophilus (strain HTA426).